Reading from the N-terminus, the 483-residue chain is Rhamnulokinase (483 aa).

11-15 (ASSGR) provides a ligand contact to ATP. Substrate-binding positions include Gly-79 and 234-236 (HDT). Asp-235 serves as the catalytic Proton acceptor. ATP is bound at residue Thr-257. Residue Asn-294 coordinates substrate. Gln-302 provides a ligand contact to ATP. The cysteines at positions 352 and 369 are disulfide-linked. Residue Gly-401 coordinates ATP.

This sequence belongs to the rhamnulokinase family. Mg(2+) serves as cofactor.

The enzyme catalyses L-rhamnulose + ATP = L-rhamnulose 1-phosphate + ADP + H(+). It functions in the pathway carbohydrate degradation; L-rhamnose degradation; glycerone phosphate from L-rhamnose: step 2/3. Its function is as follows. Involved in the catabolism of L-rhamnose (6-deoxy-L-mannose). Catalyzes the transfer of the gamma-phosphate group from ATP to the 1-hydroxyl group of L-rhamnulose to yield L-rhamnulose 1-phosphate. The protein is Rhamnulokinase of Listeria innocua serovar 6a (strain ATCC BAA-680 / CLIP 11262).